Consider the following 268-residue polypeptide: Transcription initiation factor TFIID subunit 14b (268 aa).

Residues Met-1–Pro-20 are compositionally biased toward polar residues. The interval Met-1 to Gln-36 is disordered. The YEATS domain occupies Lys-38 to His-182. The stretch at Asp-229–Lys-263 forms a coiled coil.

This sequence belongs to the YAF9 family. As to quaternary structure, component of the TFIID complex. TFIID is composed of TATA binding protein (TBP) and a number of TBP-associated factors (TAFs) whose MWs range from 14-217 kDa. Interacts with TAF1, TAF4B and TAF12B. Component of the SWR1 chromatin-remodeling complex. Interacts with FLX, a component of the transcription activator complex FRI-C. Interacts with SWC4, and with EAF1A and EAF1B (via HSA domain). As to expression, expressed in roots, leaves, inflorescence and flowering tissues.

It localises to the cytoplasm. It is found in the nucleus. Its function is as follows. Negative regulator of flowering controlling the H4K5 acetylation levels in the FLC and FT chromatin. Positively regulates FLC expression. Component of the transcription factor IID (TFIID) complex that is essential for mediating regulation of RNA polymerase transcription. Component of the SWR1 complex which mediates the ATP-dependent exchange of histone H2A for the H2A variant HZT1 leading to transcriptional regulation of selected genes by chromatin remodeling. Component of a NuA4 histone acetyltransferase complex which is involved in transcriptional activation of selected genes principally by acetylation of nucleosomal histones H4 and H2A. The polypeptide is Transcription initiation factor TFIID subunit 14b (Arabidopsis thaliana (Mouse-ear cress)).